Reading from the N-terminus, the 360-residue chain is MLQIRLRRDSPTETGNGARPSPTETVTVACPDHLVLADLPVAKGIGSVTPTTVIKPVGRRSRRQLGERVHFCVRCDFPIAIYGRLIPCDHAFCLECARSDSICYLCDERIQKIQTIKMMEGIFICAAPHCLRSFLKKLDFEAHVHDLHGSLLQADAEKEDGNQSDVQSTMQQSSASESTLRAPLRSQLQQSRELNRSASFAKSQSGFSQVQNYPPDSDNSRPPGFETASPKPGIRFPDYPQPMNLMQPPSLPVPMNQNPGLPQQFGFPSYPTTESGSSQQFFNGAQYEMTRTESGGSEQSSLLGYPPPSPMTNLNFQGSYPPPSWNPGMAPPHTTQQVNRGRDGQSFGWPQENRDGFGQE.

Residues 1 to 11 show a composition bias toward basic and acidic residues; sequence MLQIRLRRDSP. Residues 1–24 form a disordered region; sequence MLQIRLRRDSPTETGNGARPSPTE. The RING-type zinc-finger motif lies at 72–107; it reads CVRCDFPIAIYGRLIPCDHAFCLECARSDSICYLCD. The C2H2-type zinc finger occupies 123 to 148; sequence FICAAPHCLRSFLKKLDFEAHVHDLH. The segment at 156 to 360 is disordered; it reads AEKEDGNQSD…QENRDGFGQE (205 aa). 3 stretches are compositionally biased toward polar residues: residues 163 to 179, 186 to 214, and 270 to 283; these read QSDVQSTMQQSSASEST, SQLQQSRELNRSASFAKSQSGFSQVQNYP, and YPTTESGSSQQFFN. Over residues 293–304 the composition is skewed to low complexity; sequence ESGGSEQSSLLG.

Belongs to the Hakai family. As to quaternary structure, interacts with MTB and VIR. Associates with MTA, MTB, FIP37 and VIR to form the m6A writer complex which is essential for adenosine methylation at specific mRNA sequences.

It localises to the nucleus speckle. The protein localises to the nucleus. It is found in the nucleoplasm. It carries out the reaction S-ubiquitinyl-[E2 ubiquitin-conjugating enzyme]-L-cysteine + [acceptor protein]-L-lysine = [E2 ubiquitin-conjugating enzyme]-L-cysteine + N(6)-ubiquitinyl-[acceptor protein]-L-lysine.. Functionally, probable E3 ubiquitin-protein ligase which is a subunit of the N6-methyltransferase complex, a multiprotein complex that mediates N6-methyladenosine (m6A) methylation at the 5'-[AG]GAC-3' consensus sites of some mRNAs. Associates with MTA, MTB, FIP37 and VIR to form the m6A writer complex which is essential for adenosine methylation at specific mRNA sequences. N6-methyladenosine (m6A) plays a role in mRNA stability, processing, translation efficiency and editing. This Arabidopsis thaliana (Mouse-ear cress) protein is E3 ubiquitin-protein ligase HAKAI homolog.